Here is a 290-residue protein sequence, read N- to C-terminus: Glycine--tRNA ligase alpha subunit (290 aa).

This sequence belongs to the class-II aminoacyl-tRNA synthetase family. As to quaternary structure, tetramer of two alpha and two beta subunits.

It localises to the cytoplasm. The catalysed reaction is tRNA(Gly) + glycine + ATP = glycyl-tRNA(Gly) + AMP + diphosphate. This chain is Glycine--tRNA ligase alpha subunit, found in Prochlorococcus marinus (strain NATL1A).